The primary structure comprises 1273 residues: Ribulose bisphosphate carboxylase small subunit, chloroplastic (1273 aa).

The transit peptide at 1–134 (MPFDRQPLLS…AVLPFTSEKD (134 aa)) directs the protein to the chloroplast. 7 propeptides span residues 269–278 (GMAAMTGEKD), 412–421 (GMAAMTGEKD), 556–565 (GMAAMTGEKD), 699–708 (GMAAMTGEKD), 844–853 (GMAAMTGEKE), 987–996 (GMAAMTGEKD), and 1131–1140 (GMAAMTGEKE).

It belongs to the RuBisCO small chain family. Heterohexadecamer of 8 large and 8 small subunits. Eight small subunits are processed from a large polyprotein. All start with the same sequence but there is more heterogeneity at the C-terminus.

The protein localises to the plastid. Its subcellular location is the chloroplast. In terms of biological role, ruBisCO catalyzes two reactions: the carboxylation of D-ribulose 1,5-bisphosphate, the primary event in carbon dioxide fixation, as well as the oxidative fragmentation of the pentose substrate. Both reactions occur simultaneously and in competition at the same active site. Although the small subunit is not catalytic it is essential for maximal activity. The protein is Ribulose bisphosphate carboxylase small subunit, chloroplastic of Euglena gracilis.